The primary structure comprises 66 residues: SPbeta prophage-derived uncharacterized protein YopM (66 aa).

In Bacillus subtilis (strain 168), this protein is SPbeta prophage-derived uncharacterized protein YopM (yopM).